Reading from the N-terminus, the 154-residue chain is Methylglyoxal synthase (154 aa).

In terms of domain architecture, MGS-like spans 6–154 (GALPSRKQIA…AYIAERTKKL (149 aa)). Residues H19, K23, 45-48 (TGTT), and 65-66 (SG) contribute to the substrate site. D71 (proton donor/acceptor) is an active-site residue. H98 provides a ligand contact to substrate.

This sequence belongs to the methylglyoxal synthase family.

The catalysed reaction is dihydroxyacetone phosphate = methylglyoxal + phosphate. Catalyzes the formation of methylglyoxal from dihydroxyacetone phosphate. The chain is Methylglyoxal synthase from Saccharophagus degradans (strain 2-40 / ATCC 43961 / DSM 17024).